The following is a 330-amino-acid chain: DNA repair and recombination protein RadA (330 aa).

ATP is bound at residue 124-131; it reads GEFGSGKT.

Belongs to the eukaryotic RecA-like protein family.

In terms of biological role, involved in DNA repair and in homologous recombination. Binds and assemble on single-stranded DNA to form a nucleoprotein filament. Hydrolyzes ATP in a ssDNA-dependent manner and promotes DNA strand exchange between homologous DNA molecules. The protein is DNA repair and recombination protein RadA of Pyrobaculum neutrophilum (strain DSM 2338 / JCM 9278 / NBRC 100436 / V24Sta) (Thermoproteus neutrophilus).